Consider the following 707-residue polypeptide: E3 ubiquitin-protein ligase Praja-2 (707 aa).

Basic and acidic residues predominate over residues 1 to 10 (MSQYTEKEPS). 3 disordered regions span residues 1 to 23 (MSQY…AWPR), 75 to 120 (NTAG…PSVA), and 242 to 290 (AGDA…CVPG). S2 is modified (N-acetylserine). The segment covering 109–119 (LNQSTESNPSV) has biased composition (polar residues). Basic and acidic residues predominate over residues 246-276 (EAVHQDGQEFQRSSEDGIVRKRRQDDTDQGR). 2 positions are modified to phosphoserine: S306 and S320. Phosphoserine; by PKA is present on S339. 2 disordered regions span residues 380 to 403 (VTPR…GRQE) and 424 to 493 (EDSS…QTSL). The segment covering 381 to 391 (TPREAERHRAT) has biased composition (basic and acidic residues). A Phosphoserine modification is found at S430. The span at 465–481 (NEPELQSDSSGPEEENQ) shows a compositional bias: acidic residues. The segment covering 482–491 (ELSLQEGEQT) has biased composition (polar residues). An interaction with PRKAR1A, PRKAR2A and PRKAR2B region spans residues 530 to 707 (DGNNNLEDDS…PANDNAEEAP (178 aa)). The segment at 549 to 569 (WSLFDGFADGLGVAEAISYVD) is mediates interaction with TBC1D31. The RING-type; atypical zinc finger occupies 633–674 (CPICCSEYIKDDIATELPCHHFFHKPCVSIWLQKSGTCPVCR). The segment at 686-707 (AAASSEPDLDASPANDNAEEAP) is disordered.

As to quaternary structure, binds ubiquitin-conjugating enzymes (E2s). In vitro, interacts with the ubiquitin-conjugating enzyme, UBE2D2. The phosphorylated form interacts with PRKAR1A, PRKAR2A and PRKAR2B. Binds the catalytic subunits of cAMP-dependent protein kinase. Interacts with MFHAS1. Interacts with TBC1D31; the interaction is direct and recruits PJA2 to centrosomes. Highly expressed in the brain, in nerve cells but not in glial cells. Abundantly expressed in pyramidal neurons and in the CA3 region of apical dendrites. Colocalizes with PRKAR2B in dentate granule cells and at postsynaptic sites of primary hippocampal neurons.

It is found in the cytoplasm. The protein localises to the cell membrane. The protein resides in the endoplasmic reticulum membrane. Its subcellular location is the golgi apparatus membrane. It localises to the synapse. It is found in the postsynaptic density. The protein localises to the cytoskeleton. The protein resides in the microtubule organizing center. Its subcellular location is the centrosome. It carries out the reaction S-ubiquitinyl-[E2 ubiquitin-conjugating enzyme]-L-cysteine + [acceptor protein]-L-lysine = [E2 ubiquitin-conjugating enzyme]-L-cysteine + N(6)-ubiquitinyl-[acceptor protein]-L-lysine.. The protein operates within protein modification; protein ubiquitination. In terms of biological role, has E2-dependent E3 ubiquitin-protein ligase activity. Responsible for ubiquitination of cAMP-dependent protein kinase type I and type II-alpha/beta regulatory subunits and for targeting them for proteasomal degradation. Essential for PKA-mediated long-term memory processes. Through the ubiquitination of MFHAS1, positively regulates the TLR2 signaling pathway that leads to the activation of the downstream p38 and JNK MAP kinases and promotes the polarization of macrophages toward the pro-inflammatory M1 phenotype. Plays a role in ciliogenesis by ubiquitinating OFD1. This Rattus norvegicus (Rat) protein is E3 ubiquitin-protein ligase Praja-2 (Pja2).